The chain runs to 578 residues: Isocitrate dehydrogenase kinase/phosphatase (578 aa).

ATP is bound by residues 315–321 and Lys336; that span reads APGIRGM. Asp371 is a catalytic residue.

Belongs to the AceK family.

It localises to the cytoplasm. It carries out the reaction L-seryl-[isocitrate dehydrogenase] + ATP = O-phospho-L-seryl-[isocitrate dehydrogenase] + ADP + H(+). Bifunctional enzyme which can phosphorylate or dephosphorylate isocitrate dehydrogenase (IDH) on a specific serine residue. This is a regulatory mechanism which enables bacteria to bypass the Krebs cycle via the glyoxylate shunt in response to the source of carbon. When bacteria are grown on glucose, IDH is fully active and unphosphorylated, but when grown on acetate or ethanol, the activity of IDH declines drastically concomitant with its phosphorylation. This is Isocitrate dehydrogenase kinase/phosphatase from Escherichia coli (strain ATCC 8739 / DSM 1576 / NBRC 3972 / NCIMB 8545 / WDCM 00012 / Crooks).